Reading from the N-terminus, the 849-residue chain is Disks large homolog 3 (849 aa).

The segment at 32–101 (DWQVPDPYGP…GKNTPKLNGS (70 aa)) is disordered. Over residues 41–53 (PSGGNGASSGYGG) the composition is skewed to gly residues. Residues 57–69 (QTLPSQAGATPTP) are compositionally biased toward polar residues. PDZ domains lie at 149–235 (EIVL…VRRR), 244–330 (EVNL…VAKP), and 404–484 (KIIL…AQYR). At Ser-157 the chain carries Phosphoserine. The SH3 domain occupies 519-589 (KRSLYVRALF…PSKKRVEKKE (71 aa)). One can recognise a Guanylate kinase-like domain in the interval 659-834 (ARPVIILGPM…IYNKIKQIIE (176 aa)). Tyr-705 carries the phosphotyrosine modification.

It belongs to the MAGUK family. As to quaternary structure, interacts through its PDZ domains with NETO1 and APC. Interacts through its first two PDZ domains with ERBB4. Interacts through its third PDZ domain with NLGN1, and probably with NLGN2 and NLGN3. Interacts through its PDZ domains with GRIN2B and SYNGAP1. Interacts through its guanylate kinase-like domain with DLGAP1, DLGAP2, DLGAP3 and DLGAP4. Interacts with FRMPD4 (via C-terminus). Interacts with LRFN2. Interacts with LRFN1 and LRFN4. Interacts with FLTP. Interacts with DGKI (via PDZ-binding motif).

Its function is as follows. Required for learning most likely through its role in synaptic plasticity following NMDA receptor signaling. This Rattus norvegicus (Rat) protein is Disks large homolog 3 (Dlg3).